We begin with the raw amino-acid sequence, 148 residues long: Small ribosomal subunit protein uS15 (148 aa).

The disordered stretch occupies residues 1-23 (MRKSKEKGRSGSTRPPQLKKPEW).

It belongs to the universal ribosomal protein uS15 family. Part of the 30S ribosomal subunit.

The sequence is that of Small ribosomal subunit protein uS15 from Thermofilum pendens (strain DSM 2475 / Hrk 5).